We begin with the raw amino-acid sequence, 333 residues long: Probable ABC transporter permease protein y4mJ (333 aa).

Helical transmembrane passes span 30-50 (LAIA…VPQA), 62-82 (AGAP…TGGI), 84-104 (LSVG…MASG), 110-130 (ALIG…LVTV), 133-153 (LAPF…AFIV), 175-195 (IPGV…IEIF), 228-248 (FAYV…ISYI), 253-273 (STAG…GGAS), 274-294 (LLGG…ITVI), and 300-320 (LIGI…LIAV).

It belongs to the binding-protein-dependent transport system permease family. AraH/RbsC subfamily.

It is found in the cell inner membrane. In terms of biological role, probably part of the binding-protein-dependent transport system y4mIJK. This system probably transports a sugar. Probably responsible for the translocation of the substrate across the membrane. The protein is Probable ABC transporter permease protein y4mJ of Sinorhizobium fredii (strain NBRC 101917 / NGR234).